We begin with the raw amino-acid sequence, 151 residues long: Deoxyuridine 5'-triphosphate nucleotidohydrolase (151 aa).

Substrate-binding positions include arginine 70 to glycine 72, asparagine 83, leucine 87 to aspartate 89, and methionine 97.

It belongs to the dUTPase family. As to quaternary structure, homotrimer. Mg(2+) is required as a cofactor.

It carries out the reaction dUTP + H2O = dUMP + diphosphate + H(+). The protein operates within pyrimidine metabolism; dUMP biosynthesis; dUMP from dCTP (dUTP route): step 2/2. In terms of biological role, this enzyme is involved in nucleotide metabolism: it produces dUMP, the immediate precursor of thymidine nucleotides and it decreases the intracellular concentration of dUTP so that uracil cannot be incorporated into DNA. The sequence is that of Deoxyuridine 5'-triphosphate nucleotidohydrolase from Escherichia coli O7:K1 (strain IAI39 / ExPEC).